The sequence spans 625 residues: Beta-galactosidase large subunit (625 aa).

Catalysis depends on glutamate 465, which acts as the Proton donor. Glutamate 533 serves as the catalytic Nucleophile.

This sequence belongs to the glycosyl hydrolase 2 family. Heterodimer of a large (LacL) and a small subunit (LacM).

The enzyme catalyses Hydrolysis of terminal non-reducing beta-D-galactose residues in beta-D-galactosides.. Functionally, component of a beta-galactosidase. This chain is Beta-galactosidase large subunit, found in Latilactobacillus sakei (Lactobacillus sakei).